Reading from the N-terminus, the 90-residue chain is DNA-binding protein HU (90 aa).

It belongs to the bacterial histone-like protein family. In terms of assembly, homodimer.

Functionally, histone-like DNA-binding protein which is capable of wrapping DNA to stabilize it, and thus to prevent its denaturation under extreme environmental conditions. The sequence is that of DNA-binding protein HU (hup) from Staphylococcus aureus (strain COL).